We begin with the raw amino-acid sequence, 130 residues long: Small ribosomal subunit protein uS11c (130 aa).

This sequence belongs to the universal ribosomal protein uS11 family. In terms of assembly, part of the 30S ribosomal subunit.

Its subcellular location is the plastid. The protein resides in the chloroplast. This Tupiella akineta (Green alga) protein is Small ribosomal subunit protein uS11c.